The chain runs to 218 residues: Large ribosomal subunit protein bL25 (218 aa).

Residues Ala-186–Glu-218 form a disordered region.

This sequence belongs to the bacterial ribosomal protein bL25 family. CTC subfamily. Part of the 50S ribosomal subunit; part of the 5S rRNA/L5/L18/L25 subcomplex. Contacts the 5S rRNA. Binds to the 5S rRNA independently of L5 and L18.

Functionally, this is one of the proteins that binds to the 5S RNA in the ribosome where it forms part of the central protuberance. This Halothermothrix orenii (strain H 168 / OCM 544 / DSM 9562) protein is Large ribosomal subunit protein bL25.